A 746-amino-acid polypeptide reads, in one-letter code: MEHTYEYSWIIPFIPLPVPILLGVGLLLFPTATKNLRRMWTFLSIFLLSIIMIFSLYLSIQQIFLSCIHQNVWSWTINNEFSFEFGYFIDPLTSIMSILITTVGILVLIYSDNYMSHDQGYLRFFAYMGFFNTSMLGLVTSSNLIQVYFFWELVGMCSYLLIGFWFTRPIAANACQKAFVTNRVGDFGLLLGILGLYWITGSFEFQDLFEIFNNLVLNNRVNLLFLTLCAFLLFVGPIAKSAQFPLHVWLPDAMEGPTPISALIHAATMVAAGIFLVARLLPLFIVIPSIMYIISLIGIITVLLGATLALAQKDIKRGLAYSTMSQLGYMMLALGMGSYRSALFHLITHAYSKALLFLGSGSIIHSMEAIVGYSPDKSQNMILMGGLTKHVPITKIAFLVGTLSLCGIPPLACFWSKDEILNDSLLFSPIFAIIAFSTAGLTAFYMFRIYLLTFEGHLNTYFINYSGKKSSSVYSISLWGKEEEKKLNRNFGLVPLLTMNNTKRASFFCKKTYKISNNVRNQTFITVENFGLNPRTFYYPHESDNTILFPMLVLLLFTLFIGAIGIPFTQEGLDFDILSKLFTPSINLLHKNSESFVDWYEFLRNATFSVSIAFFGIFIAYYLYKPFYSSLLNLTLLNSFQKLNSKRIRWEKLINFVYNWSYNRGYIDAFFKTSLIESIRRLAKQTNFFDKRIIDGITNGVGITSFFVGEVTKYIGGSRISSYLFLYLSYVLIFLMILFFFYFEKF.

16 helical membrane-spanning segments follow: residues Trp9–Phe29, Trp40–Ile60, Ile89–Ile109, Phe125–Ile145, Val147–Thr167, Gly185–Phe205, Val221–Ser241, Thr258–Ala278, Leu280–Ile300, Leu327–Ile347, Ala354–Ser374, Ile396–Ser416, Leu425–Tyr445, Ile547–Pro567, Phe608–Tyr628, and Tyr723–Phe743.

The protein belongs to the complex I subunit 5 family. NDH is composed of at least 16 different subunits, 5 of which are encoded in the nucleus.

It localises to the plastid. The protein localises to the chloroplast thylakoid membrane. The enzyme catalyses a plastoquinone + NADH + (n+1) H(+)(in) = a plastoquinol + NAD(+) + n H(+)(out). The catalysed reaction is a plastoquinone + NADPH + (n+1) H(+)(in) = a plastoquinol + NADP(+) + n H(+)(out). Its function is as follows. NDH shuttles electrons from NAD(P)H:plastoquinone, via FMN and iron-sulfur (Fe-S) centers, to quinones in the photosynthetic chain and possibly in a chloroplast respiratory chain. The immediate electron acceptor for the enzyme in this species is believed to be plastoquinone. Couples the redox reaction to proton translocation, and thus conserves the redox energy in a proton gradient. This is NAD(P)H-quinone oxidoreductase subunit 5, chloroplastic (ndhF) from Nasturtium officinale (Watercress).